Here is an 874-residue protein sequence, read N- to C-terminus: Alanine--tRNA ligase (874 aa).

His562, His566, Cys663, and His667 together coordinate Zn(2+).

The protein belongs to the class-II aminoacyl-tRNA synthetase family. Requires Zn(2+) as cofactor.

The protein resides in the cytoplasm. It carries out the reaction tRNA(Ala) + L-alanine + ATP = L-alanyl-tRNA(Ala) + AMP + diphosphate. Catalyzes the attachment of alanine to tRNA(Ala) in a two-step reaction: alanine is first activated by ATP to form Ala-AMP and then transferred to the acceptor end of tRNA(Ala). Also edits incorrectly charged Ser-tRNA(Ala) and Gly-tRNA(Ala) via its editing domain. In Bordetella bronchiseptica (strain ATCC BAA-588 / NCTC 13252 / RB50) (Alcaligenes bronchisepticus), this protein is Alanine--tRNA ligase.